We begin with the raw amino-acid sequence, 343 residues long: Small ribosomal subunit biogenesis GTPase RsgA (343 aa).

The 160-residue stretch at 116–275 (RGQLKPVAAN…LIDSPGIREF (160 aa)) folds into the CP-type G domain. Residues 163-166 (NKAD) and 217-225 (GQSGVGKSS) each bind GTP. Positions 299, 304, 306, and 312 each coordinate Zn(2+).

Belongs to the TRAFAC class YlqF/YawG GTPase family. RsgA subfamily. As to quaternary structure, monomer. Associates with 30S ribosomal subunit, binds 16S rRNA. It depends on Zn(2+) as a cofactor.

It is found in the cytoplasm. In terms of biological role, one of several proteins that assist in the late maturation steps of the functional core of the 30S ribosomal subunit. Helps release RbfA from mature subunits. May play a role in the assembly of ribosomal proteins into the subunit. Circularly permuted GTPase that catalyzes slow GTP hydrolysis, GTPase activity is stimulated by the 30S ribosomal subunit. This is Small ribosomal subunit biogenesis GTPase RsgA from Pseudomonas fluorescens (strain ATCC BAA-477 / NRRL B-23932 / Pf-5).